The primary structure comprises 258 residues: Imidazole glycerol phosphate synthase subunit HisF (258 aa).

Active-site residues include Asp11 and Asp130.

Belongs to the HisA/HisF family. In terms of assembly, heterodimer of HisH and HisF.

Its subcellular location is the cytoplasm. It catalyses the reaction 5-[(5-phospho-1-deoxy-D-ribulos-1-ylimino)methylamino]-1-(5-phospho-beta-D-ribosyl)imidazole-4-carboxamide + L-glutamine = D-erythro-1-(imidazol-4-yl)glycerol 3-phosphate + 5-amino-1-(5-phospho-beta-D-ribosyl)imidazole-4-carboxamide + L-glutamate + H(+). It functions in the pathway amino-acid biosynthesis; L-histidine biosynthesis; L-histidine from 5-phospho-alpha-D-ribose 1-diphosphate: step 5/9. Its function is as follows. IGPS catalyzes the conversion of PRFAR and glutamine to IGP, AICAR and glutamate. The HisF subunit catalyzes the cyclization activity that produces IGP and AICAR from PRFAR using the ammonia provided by the HisH subunit. In Xanthomonas axonopodis pv. citri (strain 306), this protein is Imidazole glycerol phosphate synthase subunit HisF.